The primary structure comprises 634 residues: tRNA uridine 5-carboxymethylaminomethyl modification enzyme MnmG (634 aa).

14 to 19 (GGGHAG) is an FAD binding site. 279-293 (GPRYCPSIEDKVVRF) lines the NAD(+) pocket.

Belongs to the MnmG family. In terms of assembly, homodimer. Heterotetramer of two MnmE and two MnmG subunits. FAD serves as cofactor.

The protein resides in the cytoplasm. Functionally, NAD-binding protein involved in the addition of a carboxymethylaminomethyl (cmnm) group at the wobble position (U34) of certain tRNAs, forming tRNA-cmnm(5)s(2)U34. This is tRNA uridine 5-carboxymethylaminomethyl modification enzyme MnmG from Xanthomonas oryzae pv. oryzae (strain KACC10331 / KXO85).